We begin with the raw amino-acid sequence, 663 residues long: MDPAAPATRMTSSFTINISTPSFYNPPKKFAPVVPPKPKINPFKAPEEPQSLVPQENSAGPGLHQAFVGKVGEMPPGVDHDDFVLPPPPPSEESISPPSSSFPPPPPSFGDEGLGSPSGGSFPPPPPPEFSEPFPPPIEEFFPSPPPLEECVSDTQDLPVPVPPPPPPPLPSPPAAPPPKPSAPCEAPKPAPVFPKSSPPPAFPKPEPPSVAPKAASSIFIPKPSAPMAVAPKPLAPPPVAAKPSGPVSFAPPSPAPHTFSPDPSAPAHTFSPKTVTFSPKSAPHTFMPKPSAPVTYPQKTTEPPAEASQSSPKVTPAAKHEAPPPTVPSGGRAPGFSFAQQRERPRVLEKPRANLQGSEPEHEPTVEVQVERTRSLGPQTESGRSPGAQSTGGKDMKPLPEGLRSQKPMSDGIHRTGGQHSGHKVTGQQDQTLGSQGLNMKEVEELEMLTQQLMREMDKPPTAEAHSMELCGFCGRGLSRTETVVRAGEHLYHVACFTCSRCDQQLQGQQYYESAGKPLCDECYQDTLECCAVCDKKITERLLKAIGKSYHPSCFTCAVCKCSLQGEPFIVDDNKLPHCVNDYHRRYAPRCCVCGDPIAPEPGRDETVRVVALEKNFHMMCYKCEDCGCPLSIEADDAGCFPLDGHVLCKKCHTVRARAALG.

Positions 35–438 (PPKPKINPFK…QQDQTLGSQG (404 aa)) are disordered. Composition is skewed to pro residues over residues 122-148 (FPPP…PPPL) and 160-211 (VPVP…PPSV). Residues 298–314 (PQKTTEPPAEASQSSPK) show a composition bias toward polar residues. Composition is skewed to basic and acidic residues over residues 342 to 353 (QRERPRVLEKPR) and 360 to 375 (EPEH…ERTR). 2 stretches are compositionally biased toward polar residues: residues 377 to 393 (LGPQ…QSTG) and 427 to 438 (TGQQDQTLGSQG). 3 LIM zinc-binding domains span residues 470 to 531 (ELCG…TLEC), 532 to 589 (CAVC…RRYA), and 590 to 660 (PRCC…RARA).

It belongs to the zyxin/ajuba family. As to quaternary structure, interacts (via LIM2 domain) with hesx1/anf1. At the early gastrula stage, expressed at a low level in the animal hemisphere. Expression rises by the end of gastrulation in the anterior part of the embryo, where it gradually increases by the midneurula stage. During neurulation, expression continues most intensively in the anterior part of the neural plate and around it. At later stages, intensely expressed in the brain and at lower levels in the spinal cord, eyes, nasal placodes, within somites, and around the cement gland.

It localises to the cytoplasm. Its subcellular location is the cytoskeleton. The protein localises to the cell junction. The protein resides in the focal adhesion. In terms of biological role, adhesion plaque protein. May be a component of a signal transduction pathway that mediates adhesion-stimulated changes in gene expression. Suppresses the transcription-repressing activity of hesx1/anf1. The chain is Zyxin from Xenopus laevis (African clawed frog).